The following is a 310-amino-acid chain: Translocator protein BipD (310 aa).

Coiled coils occupy residues 127–171 (DPIL…LQDY) and 250–299 (DTAR…AIST).

It belongs to the invasin protein D family.

The protein localises to the secreted. Functionally, required for invasion of epithelial cells, as well as for survival within host cells, escape from endocytic vesicles and subsequent actin-tail formation. Probably regulates the secretion of effectors BipB and BipC and their final integration into the target cell membrane. This chain is Translocator protein BipD (bipD), found in Burkholderia mallei (strain NCTC 10247).